The following is a 563-amino-acid chain: GTPase Obg (563 aa).

Residues 2 to 168 enclose the Obg domain; the sequence is SDFVDRVTVH…RDVILELKSI (167 aa). Residues 169–349 enclose the OBG-type G domain; the sequence is ADVALVGFPS…LNFALSALVH (181 aa). GTP contacts are provided by residues 175-182, 200-204, 221-224, 301-304, and 330-332; these read GFPSAGKS, FTTLV, DVPG, NKID, and STA. 2 residues coordinate Mg(2+): Ser182 and Thr202. The region spanning 383 to 469 is the OCT domain; sequence DEGGSALEFT…ARMVEFDWDP (87 aa). A disordered region spans residues 529 to 563; that stretch reads RKAGHWADPTVDDDRHDETSLFGHGESSEDGETEE.

Belongs to the TRAFAC class OBG-HflX-like GTPase superfamily. OBG GTPase family. Monomer. Mg(2+) serves as cofactor.

Its subcellular location is the cytoplasm. Its function is as follows. An essential GTPase which binds GTP, GDP and possibly (p)ppGpp with moderate affinity, with high nucleotide exchange rates and a fairly low GTP hydrolysis rate. Plays a role in control of the cell cycle, stress response, ribosome biogenesis and in those bacteria that undergo differentiation, in morphogenesis control. This is GTPase Obg from Bifidobacterium longum (strain NCC 2705).